Here is an 89-residue protein sequence, read N- to C-terminus: Small ribosomal subunit protein uS15 (89 aa).

A compositionally biased stretch (basic and acidic residues) spans 1-11 (MSIAAERKAEV). Positions 1–24 (MSIAAERKAEVIKTNATKAGDTGS) are disordered.

This sequence belongs to the universal ribosomal protein uS15 family. In terms of assembly, part of the 30S ribosomal subunit. Forms a bridge to the 50S subunit in the 70S ribosome, contacting the 23S rRNA.

In terms of biological role, one of the primary rRNA binding proteins, it binds directly to 16S rRNA where it helps nucleate assembly of the platform of the 30S subunit by binding and bridging several RNA helices of the 16S rRNA. Forms an intersubunit bridge (bridge B4) with the 23S rRNA of the 50S subunit in the ribosome. This is Small ribosomal subunit protein uS15 from Bradyrhizobium diazoefficiens (strain JCM 10833 / BCRC 13528 / IAM 13628 / NBRC 14792 / USDA 110).